Reading from the N-terminus, the 196-residue chain is Peptide methionine sulfoxide reductase MsrA 2 (196 aa).

Cys-36 is an active-site residue.

Belongs to the MsrA Met sulfoxide reductase family.

It catalyses the reaction L-methionyl-[protein] + [thioredoxin]-disulfide + H2O = L-methionyl-(S)-S-oxide-[protein] + [thioredoxin]-dithiol. The catalysed reaction is [thioredoxin]-disulfide + L-methionine + H2O = L-methionine (S)-S-oxide + [thioredoxin]-dithiol. In terms of biological role, has an important function as a repair enzyme for proteins that have been inactivated by oxidation. Catalyzes the reversible oxidation-reduction of methionine sulfoxide in proteins to methionine. This is Peptide methionine sulfoxide reductase MsrA 2 (msrA2) from Caulobacter vibrioides (strain ATCC 19089 / CIP 103742 / CB 15) (Caulobacter crescentus).